We begin with the raw amino-acid sequence, 404 residues long: Dual-specificity RNA methyltransferase RlmN (404 aa).

Residue Glu119 is the Proton acceptor of the active site. Residues 126-358 (VGRAGALCVS…NKAGYSSPIR (233 aa)) form the Radical SAM core domain. Cys133 and Cys369 form a disulfide bridge. [4Fe-4S] cluster-binding residues include Cys140, Cys144, and Cys147. S-adenosyl-L-methionine contacts are provided by residues 195-196 (GE), Ser227, 249-251 (SLH), and Asn326. Cys369 serves as the catalytic S-methylcysteine intermediate.

This sequence belongs to the radical SAM superfamily. RlmN family. Requires [4Fe-4S] cluster as cofactor.

Its subcellular location is the cytoplasm. The catalysed reaction is adenosine(2503) in 23S rRNA + 2 reduced [2Fe-2S]-[ferredoxin] + 2 S-adenosyl-L-methionine = 2-methyladenosine(2503) in 23S rRNA + 5'-deoxyadenosine + L-methionine + 2 oxidized [2Fe-2S]-[ferredoxin] + S-adenosyl-L-homocysteine. It carries out the reaction adenosine(37) in tRNA + 2 reduced [2Fe-2S]-[ferredoxin] + 2 S-adenosyl-L-methionine = 2-methyladenosine(37) in tRNA + 5'-deoxyadenosine + L-methionine + 2 oxidized [2Fe-2S]-[ferredoxin] + S-adenosyl-L-homocysteine. Its function is as follows. Specifically methylates position 2 of adenine 2503 in 23S rRNA and position 2 of adenine 37 in tRNAs. m2A2503 modification seems to play a crucial role in the proofreading step occurring at the peptidyl transferase center and thus would serve to optimize ribosomal fidelity. The polypeptide is Dual-specificity RNA methyltransferase RlmN (Caulobacter sp. (strain K31)).